A 557-amino-acid chain; its full sequence is MRDYDEVTAFLGEWGPFQRLIFFLLSASIIPNGFNGMSIVFLAGTPEHRCLVPHTVNLSSAWRNHSIPLETKDGRQVPQSCRRYRLATIANFSALGLEPGRDVDLEQLEQENCLDGWEYNKDVFLSTIVTEWDLVCKDDWKAPLTTSLFFVGVLMGSFISGQLSDRFGRKNVLFLTMGMQTGFSFLQLFSVNFEMFTVLFVLVGMGQISNYVAAFVLGTEILSKSIRIIFATLGVCIFYAFGFMVLPLFAYFIRDWRMLLLALTVPGVLCGALWWFIPESPRWLISQGRVKEAEVIIRKAAKFNGIVAPSTIFDPSELQDLNSKKPQSHHIYDLVRTRNIRIITIMSIILWLTISVGYFGLSLDTPNLHGDIYVNCFLLAAVEVPAYVLAWLLLQHLPRRYSISAALFLGGSVLLFIQLVPSELFYLSTALVMVGKFGITSAYSMVYVYTAELYPTVVRNMGVGVSSTASRLGSILSPYFVYLGAYDRFLPYILMGSLTILTAILTLFFPESFGAPLPDTIDQMLRVKGIKQWQIQSQTRTQKDGGESPTVLKSTAF.

At M1 to L20 the chain is on the cytoplasmic side. A helical membrane pass occupies residues I21 to F41. Residues L42 to A142 lie on the Extracellular side of the membrane. 3 N-linked (GlcNAc...) asparagine glycosylation sites follow: N57, N64, and N91. A helical membrane pass occupies residues P143–L163. Residues S164–V172 lie on the Cytoplasmic side of the membrane. The helical transmembrane segment at L173–F193 threads the bilayer. The Extracellular segment spans residues E194–T197. The chain crosses the membrane as a helical span at residues V198 to G218. ATP is bound at residue G218–S225. The Cytoplasmic segment spans residues T219–T232. Residues L233–I253 form a helical membrane-spanning segment. At R254–R257 the chain is on the extracellular side. The helical transmembrane segment at M258–P278 threads the bilayer. Topologically, residues E279–R341 are cytoplasmic. Residues I342–S362 traverse the membrane as a helical segment. At L363–Y373 the chain is on the extracellular side. The chain crosses the membrane as a helical span at residues V374 to L394. Over Q395–A406 the chain is Cytoplasmic. Residues L407 to L427 form a helical membrane-spanning segment. Over S428–A430 the chain is Extracellular. A helical membrane pass occupies residues L431–A451. The Cytoplasmic segment spans residues E452–G462. A helical membrane pass occupies residues V463–L483. Topologically, residues G484–R488 are extracellular. Phosphotyrosine is present on Y486. The helical transmembrane segment at F489 to F509 threads the bilayer. Over P510–F557 the chain is Cytoplasmic. The tract at residues S537 to F557 is disordered. Phosphoserine is present on S548. T550 is modified (phosphothreonine).

It belongs to the major facilitator (TC 2.A.1) superfamily. Organic cation transporter (TC 2.A.1.19) family. Interacts with PDZK1. In terms of tissue distribution, expressed in the proximal and distal tubules and in the glomeruli in the kidney, in the myocardium, valves, and arterioles in the heart, in the labyrinthine layer of the placenta, and in the cortex, hippocampus, and cerebellum in the brain. Expressed in Sertoli cells in testis.

The protein resides in the cell membrane. Its subcellular location is the apical cell membrane. It is found in the basal cell membrane. The enzyme catalyses (R)-carnitine(out) + Na(+)(out) = (R)-carnitine(in) + Na(+)(in). The catalysed reaction is O-acetyl-(R)-carnitine(out) + Na(+)(out) = O-acetyl-(R)-carnitine(in) + Na(+)(in). It catalyses the reaction O-propanoyl-(R)-carnitine(out) + Na(+)(out) = O-propanoyl-(R)-carnitine(in) + Na(+)(in). It carries out the reaction glycine betaine(out) + Na(+)(out) = glycine betaine(in) + Na(+)(in). The enzyme catalyses glycine betaine(out) + (R)-carnitine(in) = glycine betaine(in) + (R)-carnitine(out). The catalysed reaction is O-butanoyl-(R)-carnitine(out) + Na(+)(out) = O-butanoyl-(R)-carnitine(in) + Na(+)(in). It catalyses the reaction (S)-carnitine(out) + Na(+)(out) = (S)-carnitine(in) + Na(+)(in). It carries out the reaction an O-acyl-(R)-carnitine(out) + Na(+)(out) = an O-acyl-(R)-carnitine(in) + Na(+)(in). The enzyme catalyses L-glutamyl-L-arginyl-glycyl-L-methionyl-L-threonine(out) + Na(+)(out) = L-glutamyl-L-arginyl-glycyl-L-methionyl-L-threonine(in) + Na(+)(in). The catalysed reaction is N,N-dimethylglycine(out) + Na(+)(out) = N,N-dimethylglycine(in) + Na(+)(in). Its activity is regulated as follows. Inhibited by emetine, quinidine and verapamil. The IC(50) of emetine is 4.2 uM. Not inhibited by valproic acid. Transport of (R)-carnitine is stimulated by cholesterol in the plasma membrane. Its function is as follows. Sodium-ion dependent, high affinity carnitine transporter. Involved in the active cellular uptake of carnitine. Transports one sodium ion with one molecule of carnitine. Also transports organic cations such as tetraethylammonium (TEA) without the involvement of sodium. Also relative uptake activity ratio of carnitine to TEA is 11.3. May also contribute to regulate the transport of organic compounds in testis across the blood-testis-barrier. This chain is Organic cation/carnitine transporter 2 (Slc22a5), found in Rattus norvegicus (Rat).